Reading from the N-terminus, the 291-residue chain is Acetyl-coenzyme A carboxylase carboxyl transferase subunit beta (291 aa).

The 269-residue stretch at 23 to 291 (VYTKDPVSGE…TPASASVAKS (269 aa)) folds into the CoA carboxyltransferase N-terminal domain.

This sequence belongs to the AccD/PCCB family. As to quaternary structure, acetyl-CoA carboxylase is a heterohexamer composed of biotin carboxyl carrier protein (AccB), biotin carboxylase (AccC) and two subunits each of ACCase subunit alpha (AccA) and ACCase subunit beta (AccD).

Its subcellular location is the cytoplasm. It carries out the reaction N(6)-carboxybiotinyl-L-lysyl-[protein] + acetyl-CoA = N(6)-biotinyl-L-lysyl-[protein] + malonyl-CoA. It functions in the pathway lipid metabolism; malonyl-CoA biosynthesis; malonyl-CoA from acetyl-CoA: step 1/1. Its function is as follows. Component of the acetyl coenzyme A carboxylase (ACC) complex. Biotin carboxylase (BC) catalyzes the carboxylation of biotin on its carrier protein (BCCP) and then the CO(2) group is transferred by the transcarboxylase to acetyl-CoA to form malonyl-CoA. In Opitutus terrae (strain DSM 11246 / JCM 15787 / PB90-1), this protein is Acetyl-coenzyme A carboxylase carboxyl transferase subunit beta.